The sequence spans 550 residues: Methionine--tRNA ligase (550 aa).

The 'HIGH' region signature appears at 13–23 (PYANGPLHFGH). Zn(2+) is bound by residues C145, C148, C158, and C161. Residues 331 to 335 (QFSKS) carry the 'KMSKS' region motif. K334 lines the ATP pocket.

Belongs to the class-I aminoacyl-tRNA synthetase family. MetG type 1 subfamily. As to quaternary structure, monomer. Zn(2+) is required as a cofactor.

It localises to the cytoplasm. The enzyme catalyses tRNA(Met) + L-methionine + ATP = L-methionyl-tRNA(Met) + AMP + diphosphate. In terms of biological role, is required not only for elongation of protein synthesis but also for the initiation of all mRNA translation through initiator tRNA(fMet) aminoacylation. The sequence is that of Methionine--tRNA ligase (metG) from Chlamydia muridarum (strain MoPn / Nigg).